The sequence spans 710 residues: Polyribonucleotide nucleotidyltransferase (710 aa).

2 residues coordinate Mg(2+): Asp-491 and Asp-497. The region spanning Pro-559–Ile-618 is the KH domain. The S1 motif domain maps to Gly-628–Lys-696.

This sequence belongs to the polyribonucleotide nucleotidyltransferase family. It depends on Mg(2+) as a cofactor.

It localises to the cytoplasm. The catalysed reaction is RNA(n+1) + phosphate = RNA(n) + a ribonucleoside 5'-diphosphate. Functionally, involved in mRNA degradation. Catalyzes the phosphorolysis of single-stranded polyribonucleotides processively in the 3'- to 5'-direction. This Herminiimonas arsenicoxydans protein is Polyribonucleotide nucleotidyltransferase.